The primary structure comprises 415 residues: Gamma-glutamyl phosphate reductase 1 (415 aa).

This sequence belongs to the gamma-glutamyl phosphate reductase family.

It localises to the cytoplasm. The catalysed reaction is L-glutamate 5-semialdehyde + phosphate + NADP(+) = L-glutamyl 5-phosphate + NADPH + H(+). It functions in the pathway amino-acid biosynthesis; L-proline biosynthesis; L-glutamate 5-semialdehyde from L-glutamate: step 2/2. In terms of biological role, catalyzes the NADPH-dependent reduction of L-glutamate 5-phosphate into L-glutamate 5-semialdehyde and phosphate. The product spontaneously undergoes cyclization to form 1-pyrroline-5-carboxylate. In Bacillus licheniformis (strain ATCC 14580 / DSM 13 / JCM 2505 / CCUG 7422 / NBRC 12200 / NCIMB 9375 / NCTC 10341 / NRRL NRS-1264 / Gibson 46), this protein is Gamma-glutamyl phosphate reductase 1.